We begin with the raw amino-acid sequence, 626 residues long: Conserved oligomeric Golgi complex subunit 8 (626 aa).

Pro residues predominate over residues 580-598 (PAPAPALPPNAPSPEPVTP). The tract at residues 580-626 (PAPAPALPPNAPSPEPVTPVTPAVPDAGQEEVESAGPPQPDEPSAGI) is disordered.

The protein belongs to the COG8 family. In terms of assembly, component of the conserved oligomeric Golgi complex which is composed of eight different subunits and is required for normal Golgi morphology and localization.

The protein localises to the golgi apparatus membrane. In terms of biological role, required for normal Golgi function. The protein is Conserved oligomeric Golgi complex subunit 8 (COG8) of Bos taurus (Bovine).